Consider the following 433-residue polypeptide: Trigger factor (433 aa).

The PPIase FKBP-type domain occupies 165 to 250 (GDSAIIDFEG…LHNIQEKVKV (86 aa)).

This sequence belongs to the FKBP-type PPIase family. Tig subfamily.

The protein localises to the cytoplasm. It catalyses the reaction [protein]-peptidylproline (omega=180) = [protein]-peptidylproline (omega=0). Its function is as follows. Involved in protein export. Acts as a chaperone by maintaining the newly synthesized protein in an open conformation. Functions as a peptidyl-prolyl cis-trans isomerase. This Sulfurimonas denitrificans (strain ATCC 33889 / DSM 1251) (Thiomicrospira denitrificans (strain ATCC 33889 / DSM 1251)) protein is Trigger factor.